Here is a 243-residue protein sequence, read N- to C-terminus: Pyridoxine 5'-phosphate synthase (243 aa).

Position 9 (asparagine 9) interacts with 3-amino-2-oxopropyl phosphate. 11–12 (DH) provides a ligand contact to 1-deoxy-D-xylulose 5-phosphate. Position 20 (arginine 20) interacts with 3-amino-2-oxopropyl phosphate. Histidine 45 functions as the Proton acceptor in the catalytic mechanism. Residues arginine 47 and histidine 52 each contribute to the 1-deoxy-D-xylulose 5-phosphate site. Glutamate 72 (proton acceptor) is an active-site residue. Threonine 102 provides a ligand contact to 1-deoxy-D-xylulose 5-phosphate. Residue histidine 193 is the Proton donor of the active site. Residues glycine 194 and 215-216 (GH) each bind 3-amino-2-oxopropyl phosphate.

This sequence belongs to the PNP synthase family. Homooctamer; tetramer of dimers.

The protein resides in the cytoplasm. It carries out the reaction 3-amino-2-oxopropyl phosphate + 1-deoxy-D-xylulose 5-phosphate = pyridoxine 5'-phosphate + phosphate + 2 H2O + H(+). Its pathway is cofactor biosynthesis; pyridoxine 5'-phosphate biosynthesis; pyridoxine 5'-phosphate from D-erythrose 4-phosphate: step 5/5. In terms of biological role, catalyzes the complicated ring closure reaction between the two acyclic compounds 1-deoxy-D-xylulose-5-phosphate (DXP) and 3-amino-2-oxopropyl phosphate (1-amino-acetone-3-phosphate or AAP) to form pyridoxine 5'-phosphate (PNP) and inorganic phosphate. This chain is Pyridoxine 5'-phosphate synthase, found in Salmonella typhimurium (strain LT2 / SGSC1412 / ATCC 700720).